The primary structure comprises 296 residues: Peptide transport system permease protein SapC (296 aa).

Residues 1 to 28 (MPYDSVYSEKRPPGTLRTAWRKFYSDAS) lie on the Cytoplasmic side of the membrane. A helical transmembrane segment spans residues 29 to 49 (AMVGLYGCAGLAVLCIFGGWF). At 50 to 98 (APYGIDQQFLGYQLLPPSWSRYGEVSFFLGTDDLGRDVLSRLLSGAAPT) the chain is on the periplasmic side. The helical transmembrane segment at 99 to 119 (VGGAFVVTLAATICGLVLGTF) threads the bilayer. The 186-residue stretch at 99-284 (VGGAFVVTLA…ISVLLVNLLG (186 aa)) folds into the ABC transmembrane type-1 domain. Over 120–133 (AGATHGLRSAVLNH) the chain is Cytoplasmic. Residues 134-154 (ILDTLLAIPSLLLAIIVVAFA) traverse the membrane as a helical segment. The Periplasmic portion of the chain corresponds to 155–196 (GPSLSHAMFAVWLALLPRMVRSIYSMVHDELEKEYVIAARLD). The helical transmembrane segment at 197-217 (GASTLNILWFAVMPNITAGLV) threads the bilayer. Residues 218–222 (TEITR) are Cytoplasmic-facing. Residues 223-243 (ALSMAILDIAALGFLDLGAQL) traverse the membrane as a helical segment. Over 244 to 257 (PSPEWGAMLGDALE) the chain is Periplasmic. A helical membrane pass occupies residues 258 to 278 (LIYVAPWTVMLPGAAIMISVL). At 279 to 296 (LVNLLGDGVRRAIIAGVE) the chain is on the cytoplasmic side.

Belongs to the binding-protein-dependent transport system permease family. OppBC subfamily.

It localises to the cell inner membrane. Involved in a peptide intake transport system that plays a role in the resistance to antimicrobial peptides. This Escherichia coli O6:H1 (strain CFT073 / ATCC 700928 / UPEC) protein is Peptide transport system permease protein SapC (sapC).